A 217-amino-acid polypeptide reads, in one-letter code: Non-structural protein NS3 (217 aa).

This sequence belongs to the orbivirus NS3 family.

Its function is as follows. May play a role in the release of virions from infected cells. In African horse sickness virus 6 (AHSV-6), this protein is Non-structural protein NS3 (Segment-10).